Here is a 29-residue protein sequence, read N- to C-terminus: Cyclotide mden-B (29 aa).

A cross-link (cyclopeptide (Gly-Asn)) is located at residues glycine 1 to asparagine 29. 3 disulfide bridges follow: cysteine 5–cysteine 19, cysteine 9–cysteine 21, and cysteine 14–cysteine 26.

Belongs to the cyclotide family. Moebius subfamily. In terms of processing, this is a cyclic peptide.

In terms of biological role, probably participates in a plant defense mechanism. The protein is Cyclotide mden-B of Melicytus dentatus (Tree violet).